The sequence spans 239 residues: Gamma-lactamase MBL2 (239 aa).

Zn(2+)-binding residues include histidine 56, histidine 58, aspartate 60, histidine 61, histidine 141, and aspartate 165.

Belongs to the metallo-beta-lactamase superfamily.

Its function is as follows. Gamma-lactamase; part of the Fusarium detoxification of benzoxazolinone cluster 2 (FDB2) involved in the degradation of benzoxazolinones produced by the host plant. Maize, wheat, and rye produce the 2 benzoxazinone phytoanticipins 2,4-dihy-droxy-7-methoxy-1,4-benzoxazin-3-one (DIMBOA) and 2,4-dihydroxy-1,4-benzoxazin-3-one (DIBOA) that, due to their inherent instability once released, spontaneously degrade to the more stable corresponding benzoxazolinones, 6-methoxy-2-benzoxazolinone (MBOA) and 2-benzoxazolinone (BOA), respectively. The first step in the detoxification of benzoxazolinones involves the hydrolysis of the cyclic ester bond of benzoxazolinones by the FDB1 cluster gamma-lactamase MBL1 to aminophenols. MBL1 is able to convert BOA into 2-aminophenol (2-AP), as well as MBOA into 5-methoxy-2-aminophenol (2-AMP). The FDB2 cluster N-malonyltransferase FDB2/NAT1 then metabolizes aminophenols via N-malonylation to non-toxic malonamic acids. FDB2/NAT1 converts 2-AP into N-(2-hydroxyphenyl) malonamic acid (HPMA) and 2-AMP into N-(2-hydroxy-4-methoxyphenyl) malonamic acid (HMPMA). The duplicated dienlactone hydrolases DLH1 and DLH2 may provide redundant function for hydrolyzing the lactone moiety in the BOA molecule. The roles of the amidases and other enzymes encoded by the 2 FDB clusters have not been identified so far. This is Gamma-lactamase MBL2 from Gibberella moniliformis (strain M3125 / FGSC 7600) (Maize ear and stalk rot fungus).